Here is a 309-residue protein sequence, read N- to C-terminus: Taste receptor type 2 member 45 (309 aa).

Position 1 (methionine 1) is a topological domain, extracellular. A helical membrane pass occupies residues 2–22 (ITFLPIIFSILVVVTFVIGNF). The Cytoplasmic portion of the chain corresponds to 23–55 (ANGFIALVNSTEWVKRQKISFADQIVTALAVSR). Residues 56–76 (VGLLWVLLLNWYSTVLNPAFY) form a helical membrane-spanning segment. Topologically, residues 77-98 (SVELRTTAYNIWAVTGHFSNWL) are extracellular. Residues 99–119 (ATSLSIFYLLKIANFSNLIFL) traverse the membrane as a helical segment. At 120-126 (HLKRRVK) the chain is on the cytoplasmic side. The helical transmembrane segment at 127-147 (SVILVMLLGPLLFLACHLFVV) threads the bilayer. Residues 148–178 (NMNQIVWTKEYEGNMTWKIKLRRAMYLSDTT) lie on the Extracellular side of the membrane. An N-linked (GlcNAc...) asparagine glycan is attached at asparagine 161. Residues 179–199 (VTMLANLVPFTVTLISFLLLV) form a helical membrane-spanning segment. The Cytoplasmic segment spans residues 200-229 (CSLCEHLKKMQLHGKGSQDPSTKVHIKALQ). The chain crosses the membrane as a helical span at residues 230 to 250 (TVISFLLLCAIYFVSVIISVW). Topologically, residues 251 to 259 (SFKNLENKP) are extracellular. A helical transmembrane segment spans residues 260–280 (VFMFCQAIGFSCSSAHPFILI). The Cytoplasmic portion of the chain corresponds to 281–309 (WGNKKLKQPFLSVLWQMRYWVKGEKPSSS).

This sequence belongs to the G-protein coupled receptor T2R family.

Its subcellular location is the membrane. In terms of biological role, receptor that may play a role in the perception of bitterness and is gustducin-linked. May play a role in sensing the chemical composition of the gastrointestinal content. The activity of this receptor may stimulate alpha gustducin, mediate PLC-beta-2 activation and lead to the gating of TRPM5. This is Taste receptor type 2 member 45 (TAS2R45) from Pan paniscus (Pygmy chimpanzee).